Here is a 1165-residue protein sequence, read N- to C-terminus: ATP-dependent helicase/deoxyribonuclease subunit B (1165 aa).

The 324-residue stretch at 1–324 folds into the UvrD-like helicase ATP-binding domain; the sequence is MRFIIGGAGS…LVEAQNRREE (324 aa). Position 6-13 (6-13) interacts with ATP; that stretch reads GGAGSGKS. The UvrD-like helicase C-terminal domain occupies 282–597; that stretch reads PLRFRGAPEL…IVGTVERSRH (316 aa). [4Fe-4S] cluster is bound by residues Cys803, Cys1121, Cys1124, and Cys1130.

Belongs to the helicase family. AddB/RexB type 1 subfamily. As to quaternary structure, heterodimer of AddA and AddB. Mg(2+) is required as a cofactor. The cofactor is [4Fe-4S] cluster.

Its function is as follows. The heterodimer acts as both an ATP-dependent DNA helicase and an ATP-dependent, dual-direction single-stranded exonuclease. Recognizes the chi site generating a DNA molecule suitable for the initiation of homologous recombination. The AddB subunit has 5' -&gt; 3' nuclease activity but not helicase activity. The sequence is that of ATP-dependent helicase/deoxyribonuclease subunit B from Symbiobacterium thermophilum (strain DSM 24528 / JCM 14929 / IAM 14863 / T).